The sequence spans 172 residues: Myosin regulatory light polypeptide 9 (172 aa).

Residues 1-16 are compositionally biased toward basic residues; the sequence is MSSKRAKTKTTKKRPQ. Residues 1-20 are disordered; it reads MSSKRAKTKTTKKRPQRATS. Serine 2 carries the post-translational modification N-acetylserine. At threonine 19 the chain carries Phosphothreonine; by MLCK, CIT and ROCK2. Phosphoserine; by CDC42BP, CIT, MLCK, PAK1, ROCK1, ROCK2, DAPK1, DAPK2 and ZIPK/DAPK3 is present on serine 20. 3 consecutive EF-hand domains span residues 29–64, 98–133, and 134–169; these read SQIQEFKEAFNMIDQNRDGFIDKEDLHDMLASLGKN, DPEDVIRNAFACFDEEATGTIQEDYLRELLTTMGDR, and FTDEEVDELYREAPIDKKGNFNYIEFTRILKHGAKD. Residues aspartate 42, asparagine 44, aspartate 46, and aspartate 53 each coordinate Ca(2+).

As to quaternary structure, myosin is a hexamer of 2 heavy chains and 4 light chains: interacts with myosin heavy chain MYO19. Interacts with LUZP1; the interaction results in inhibition of phosphorylation of MYL9 by DAPK3. In terms of processing, phosphorylation increases the actin-activated myosin ATPase activity and thereby regulates the contractile activity. It is required to generate the driving force in the migration of the cells but not necessary for localization of myosin-2 at the leading edge. Phosphorylation is required for myotube formation. Phosphorylated by DAPK3; DAPK3-mediated phosphorylation is inhibited by LUZP1.

It localises to the cytoplasm. The protein localises to the cytoskeleton. It is found in the cell cortex. Functionally, myosin regulatory subunit that plays an important role in regulation of both smooth muscle and nonmuscle cell contractile activity via its phosphorylation. Implicated in cytokinesis, receptor capping, and cell locomotion. In myoblasts, may regulate PIEZO1-dependent cortical actomyosin assembly involved in myotube formation. The chain is Myosin regulatory light polypeptide 9 (MYL9) from Bos taurus (Bovine).